A 447-amino-acid polypeptide reads, in one-letter code: Omega-6 fatty acid desaturase, chloroplastic (447 aa).

The transit peptide at 1-65 (MESAITISNH…TRRKSTLVQA (65 aa)) directs the protein to the chloroplast. An N-acetylvaline modification is found at V66. The Histidine box-1 signature appears at 171 to 175 (HDCAH). A Histidine box-2 motif is present at residues 207–211 (HDQHH). The short motif at 367-371 (HIPHH) is the Histidine box-3 element.

The protein belongs to the fatty acid desaturase type 1 family.

It localises to the plastid. It is found in the chloroplast membrane. The catalysed reaction is a (9Z)-octadecenoyl-containing glycerolipid + 2 reduced [2Fe-2S]-[ferredoxin] + O2 + 2 H(+) = a (9Z,12Z)-octadecadienoyl-containing glycerolipid + 2 oxidized [2Fe-2S]-[ferredoxin] + 2 H2O. Its pathway is lipid metabolism; polyunsaturated fatty acid biosynthesis. Its function is as follows. Chloroplast omega-6 fatty acid desaturase introduces the second double bond in the biosynthesis of 16:3 and 18:3 fatty acids, important constituents of plant membranes. It is thought to use ferredoxin as an electron donor and to act on fatty acids esterified to galactolipids, sulfolipids and phosphatidylglycerol. In Spinacia oleracea (Spinach), this protein is Omega-6 fatty acid desaturase, chloroplastic.